Reading from the N-terminus, the 116-residue chain is Prefoldin subunit beta (116 aa).

It belongs to the prefoldin subunit beta family. In terms of assembly, heterohexamer of two alpha and four beta subunits.

Its subcellular location is the cytoplasm. In terms of biological role, molecular chaperone capable of stabilizing a range of proteins. Seems to fulfill an ATP-independent, HSP70-like function in archaeal de novo protein folding. The sequence is that of Prefoldin subunit beta (pfdB) from Archaeoglobus fulgidus (strain ATCC 49558 / DSM 4304 / JCM 9628 / NBRC 100126 / VC-16).